Reading from the N-terminus, the 561-residue chain is Arginine--tRNA ligase (561 aa).

Positions 128 to 138 match the 'HIGH' region motif; that stretch reads ANPTGPLHVGH.

The protein belongs to the class-I aminoacyl-tRNA synthetase family. As to quaternary structure, monomer.

The protein localises to the cytoplasm. It catalyses the reaction tRNA(Arg) + L-arginine + ATP = L-arginyl-tRNA(Arg) + AMP + diphosphate. The polypeptide is Arginine--tRNA ligase (Chromohalobacter salexigens (strain ATCC BAA-138 / DSM 3043 / CIP 106854 / NCIMB 13768 / 1H11)).